Reading from the N-terminus, the 233-residue chain is ATP synthase subunit a (233 aa).

5 consecutive transmembrane segments (helical) span residues 29–49 (FKHV…GLIV), 86–106 (VFPL…LGLV), 118–135 (TNAA…YQGL), 188–208 (VLFF…LFLL), and 209–229 (GKVL…KGAF).

This sequence belongs to the ATPase A chain family. In terms of assembly, F-type ATPases have 2 components, CF(1) - the catalytic core - and CF(0) - the membrane proton channel. CF(1) has five subunits: alpha(3), beta(3), gamma(1), delta(1), epsilon(1). CF(0) has three main subunits: a(1), b(2) and c(9-12). The alpha and beta chains form an alternating ring which encloses part of the gamma chain. CF(1) is attached to CF(0) by a central stalk formed by the gamma and epsilon chains, while a peripheral stalk is formed by the delta and b chains.

The protein resides in the cell inner membrane. Its function is as follows. Key component of the proton channel; it plays a direct role in the translocation of protons across the membrane. In Nitratidesulfovibrio vulgaris (strain ATCC 29579 / DSM 644 / CCUG 34227 / NCIMB 8303 / VKM B-1760 / Hildenborough) (Desulfovibrio vulgaris), this protein is ATP synthase subunit a.